The sequence spans 583 residues: Sensor protein SrrB (583 aa).

At 1–11 (MMSRLNSVVIK) the chain is on the cytoplasmic side. Residues 12-32 (LWLTIILIVTTVLILLSIALI) traverse the membrane as a helical segment. The Extracellular portion of the chain corresponds to 33–174 (TFMQYYFTQE…SIEDTNNAIT (142 aa)). Residues 175 to 195 (IITIITAVIFLTITTVFAFFL) traverse the membrane as a helical segment. Topologically, residues 196–583 (SSRITKPLRR…TFIIKLPKPE (388 aa)) are cytoplasmic. The 53-residue stretch at 197-249 (SRITKPLRRLRDQATRVSEGDYSYKPSVTTKDEIGQLSQAFNQMSTEIEEHVD) folds into the HAMP domain. The 218-residue stretch at 366-583 (NVSHELRTPI…TFIIKLPKPE (218 aa)) folds into the Histidine kinase domain. Residue H369 is modified to Phosphohistidine; by autocatalysis.

It localises to the cell membrane. It carries out the reaction ATP + protein L-histidine = ADP + protein N-phospho-L-histidine.. Its function is as follows. Member of the two-component regulatory system SrrA/SrrB, which is involved in the global regulation of staphylococcal virulence factors in response to environmental oxygen levels as well as biofilm formation. Also plays an essential role in host-derived nitric oxide resistance by regulating hmp/flavohemoglobin, an enzyme that detoxifies nitric oxide by converting it to nitrate. Functions as a sensor protein kinase which is autophosphorylated at a histidine residue and transfers its phosphate group to SrrA. In turn, SrrA binds to the upstream promoter regions of the target genes to positively and negatively regulate their expression. This is Sensor protein SrrB (srrB) from Staphylococcus aureus (strain MRSA252).